Reading from the N-terminus, the 180-residue chain is Pro-glucagon (180 aa).

An N-terminal signal peptide occupies residues 1–20 (MKTIYFVAGLLIMLVQGSWQ). Positions 25-58 (DTEENPRSFPASQTEAHEDPDEMNEDKRHSQGTF) are disordered. Ser-54 is modified (phosphoserine). The propeptide occupies 84 to 89 (NRNNIA). Residues Ser-105 and Ser-108 each carry the phosphoserine modification. At Arg-127 the chain carries Arginine amide. Residues 131-145 (DFPEEVAIAEELGRR) constitute a propeptide that is removed on maturation. Ser-150 and Ser-152 each carry phosphoserine.

Belongs to the glucagon family. In terms of processing, proglucagon is post-translationally processed in a tissue-specific manner in pancreatic A cells and intestinal L cells. In pancreatic A cells, the major bioactive hormone is glucagon cleaved by PCSK2/PC2. In the intestinal L cells PCSK1/PC1 liberates GLP-1, GLP-2, glicentin and oxyntomodulin. GLP-1 is further N-terminally truncated by post-translational processing in the intestinal L cells resulting in GLP-1(7-37) GLP-1-(7-36)amide. The C-terminal amidation is neither important for the metabolism of GLP-1 nor for its effects on the endocrine pancreas. In terms of tissue distribution, secreted in the A cells of the islets of Langerhans. As to expression, secreted in the A cells of the islets of Langerhans. Secreted from enteroendocrine L cells throughout the gastrointestinal tract. Also secreted in selected neurons in the brain. Secreted from enteroendocrine cells throughout the gastrointestinal tract. Also secreted in selected neurons in the brain. In terms of tissue distribution, secreted from enteroendocrine cells throughout the gastrointestinal tract.

The protein localises to the secreted. In terms of biological role, plays a key role in glucose metabolism and homeostasis. Regulates blood glucose by increasing gluconeogenesis and decreasing glycolysis. A counterregulatory hormone of insulin, raises plasma glucose levels in response to insulin-induced hypoglycemia. Plays an important role in initiating and maintaining hyperglycemic conditions in diabetes. Potent stimulator of glucose-dependent insulin release. Also stimulates insulin release in response to IL6. Plays important roles on gastric motility and the suppression of plasma glucagon levels. May be involved in the suppression of satiety and stimulation of glucose disposal in peripheral tissues, independent of the actions of insulin. Has growth-promoting activities on intestinal epithelium. May also regulate the hypothalamic pituitary axis (HPA) via effects on LH, TSH, CRH, oxytocin, and vasopressin secretion. Increases islet mass through stimulation of islet neogenesis and pancreatic beta cell proliferation. Inhibits beta cell apoptosis. Functionally, stimulates intestinal growth and up-regulates villus height in the small intestine, concomitant with increased crypt cell proliferation and decreased enterocyte apoptosis. The gastrointestinal tract, from the stomach to the colon is the principal target for GLP-2 action. Plays a key role in nutrient homeostasis, enhancing nutrient assimilation through enhanced gastrointestinal function, as well as increasing nutrient disposal. Stimulates intestinal glucose transport and decreases mucosal permeability. Its function is as follows. Significantly reduces food intake. Inhibits gastric emptying in humans. Suppression of gastric emptying may lead to increased gastric distension, which may contribute to satiety by causing a sensation of fullness. In terms of biological role, may modulate gastric acid secretion and the gastro-pyloro-duodenal activity. May play an important role in intestinal mucosal growth in the early period of life. In Mus musculus (Mouse), this protein is Pro-glucagon (Gcg).